Consider the following 250-residue polypeptide: Small ribosomal subunit protein uS3 (250 aa).

The region spanning 39 to 111 (IRTLIKNHYP…KVQINIFEVK (73 aa)) is the KH type-2 domain.

Belongs to the universal ribosomal protein uS3 family. Part of the 30S ribosomal subunit. Forms a tight complex with proteins S10 and S14.

In terms of biological role, binds the lower part of the 30S subunit head. Binds mRNA in the 70S ribosome, positioning it for translation. In Phytoplasma vitis (Flavescence doree phytoplasma), this protein is Small ribosomal subunit protein uS3.